A 114-amino-acid chain; its full sequence is Tyrosine-protein phosphatase 11 (114 aa).

Residues 1-114 (WRMIWEHNTR…EAKHTGPTIV (114 aa)) enclose the Tyrosine-protein phosphatase domain. Substrate is bound at residue D81.

This sequence belongs to the protein-tyrosine phosphatase family.

It carries out the reaction O-phospho-L-tyrosyl-[protein] + H2O = L-tyrosyl-[protein] + phosphate. The chain is Tyrosine-protein phosphatase 11 (STY-11) from Styela plicata (Wrinkled sea squirt).